Consider the following 353-residue polypeptide: MEVRNMVDYELLKKVVEAPGVSGYEFLGIRDVVIEEIKDYVDEVKVDKLGNVIAHKKGEGPKVMIAAHMDQIGLMVTHIEKNGFLRVAPIGGVDPKTLIAQRFKVWIDKGKFIYGVGASVPPHIQKPEDRKKAPDWDQIFIDIGAESKEEAEDMGVKIGTVITWDGRLERLGKHRFVSIAFDDRIAVYTILEVAKQLKDAKADVYFVATVQEEVGLRGARTSAFGIEPDYGFAIDVTIAADIPGTPEHKQVTHLGKGTAIKIMDRSVICHPTIVRWLEELAKKHEIPYQLEILLGGGTDAGAIHLTKAGVPTGALSVPARYIHSNTEVVDERDVDATVELMTKALENIHELKI.

Residues H68 and D182 each coordinate Zn(2+). Residue E212 is the Proton acceptor of the active site. Positions 213, 235, and 323 each coordinate Zn(2+).

This sequence belongs to the peptidase M42 family. As to quaternary structure, homododecamer. The assembly of six dimers results in a tetrahedral-shaped structure; all 12 active sites are located on the inside of the tetrahedron. Substrate access is granted by four pores with a maximal diameter of 18 Angstroms, allowing only small peptides and unfolded proteins access to the active site. Beside the four entry ports, TET contains 12 small product release openings, which are large enough to allow passage of only single amino acid residues. It depends on Zn(2+) as a cofactor. Co(2+) serves as cofactor.

Inhibited by EDTA and bestatin in vitro. Is insensitive to papain, antipain, chymostatin, leupeptin, pepstatin and aprotinin. Functions as an aminopeptidase, with a clear preference for leucine as the N-terminal amino acid. However, can also cleave moderately long polypeptide substrates of various compositions in a fairly unspecific manner. Has neither carboxypeptidase nor endoproteolytic activities, and it is devoid of N-terminal deblocking activity. Is involved in protein degradation, performing degradation of oligopeptides produced by the proteasome into single amino acids. The chain is Tetrahedral aminopeptidase (frvX) from Pyrococcus horikoshii (strain ATCC 700860 / DSM 12428 / JCM 9974 / NBRC 100139 / OT-3).